Reading from the N-terminus, the 286-residue chain is Ribosome-inactivating protein momordin II (286 aa).

The N-terminal stretch at 1 to 23 is a signal peptide; the sequence is MVKCLLLSFLIIAIFIGVPTAKG. The active site involves glutamate 181.

This sequence belongs to the ribosome-inactivating protein family. Type 1 RIP subfamily.

It catalyses the reaction Endohydrolysis of the N-glycosidic bond at one specific adenosine on the 28S rRNA.. The sequence is that of Ribosome-inactivating protein momordin II from Momordica balsamina (Bitter gourd).